The following is a 501-amino-acid chain: Dihydrolipoyl dehydrogenase, mitochondrial (501 aa).

Residues 1–31 (MAMANLARRKGYSLLSSETLRYSFSLRSRAF) constitute a mitochondrion transit peptide. FAD is bound by residues 67-76 (EKRGALGGTC), Lys-85, Gly-149, and 178-180 (TGS). Cys-76 and Cys-81 are disulfide-bonded. NAD(+) is bound by residues 215–222 (GAGYIGLE), Glu-238, Val-272, and Gly-307. Residues Asp-348 and 354–357 (MLAH) each bind FAD. His-480 acts as the Proton acceptor in catalysis.

The protein belongs to the class-I pyridine nucleotide-disulfide oxidoreductase family. In terms of assembly, homodimer. The cofactor is FAD.

It localises to the mitochondrion matrix. The enzyme catalyses N(6)-[(R)-dihydrolipoyl]-L-lysyl-[protein] + NAD(+) = N(6)-[(R)-lipoyl]-L-lysyl-[protein] + NADH + H(+). Its function is as follows. Lipoamide dehydrogenase is a component of the glycine cleavage system as well as of the alpha-ketoacid dehydrogenase complexes. The pyruvate dehydrogenase complex contains multiple copies of three enzymatic components: pyruvate dehydrogenase (E1), dihydrolipoamide acetyltransferase (E2) and lipoamide dehydrogenase (E3). This chain is Dihydrolipoyl dehydrogenase, mitochondrial (LPD), found in Pisum sativum (Garden pea).